We begin with the raw amino-acid sequence, 324 residues long: Olfactory receptor 51D1 (324 aa).

Residues 1–38 (MQKPQLLVPIIATSNGNLVHAAYFLLVGIPGLGPTIHF) lie on the Extracellular side of the membrane. The helical transmembrane segment at 39-59 (WLAFPLCFMYALATLGNLTIV) threads the bilayer. Residues 60–67 (LIIRVERR) lie on the Cytoplasmic side of the membrane. The helical transmembrane segment at 68-88 (LHEPMYLFLAMLSTIDLVLSS) threads the bilayer. The Extracellular portion of the chain corresponds to 89 to 112 (ITMPKMASLFLMGIQEIEFNICLA). Residues cysteine 110 and cysteine 202 are joined by a disulfide bond. Residues 113–133 (QMFLIHALSAVESAVLLAMAF) traverse the membrane as a helical segment. The Cytoplasmic segment spans residues 134–152 (DRFVAICHPLRHASVLTGC). The chain crosses the membrane as a helical span at residues 153–173 (TVAKIGLSALTRGFVFFFPLP). Residues 174–209 (FILKWLSYCQTHTVTHSFCLHQDIMKLSCTDTRVNV) lie on the Extracellular side of the membrane. A helical membrane pass occupies residues 210–230 (VYGLFIILSVMGVDSLFIGFS). The Cytoplasmic segment spans residues 231-250 (YILILWAVLELSSRRAALKA). Residues 251–271 (FNTCISHLCAVLVFYVPLIGL) traverse the membrane as a helical segment. Over 272–285 (SVVHRLGGPTSLLH) the chain is Extracellular. A helical membrane pass occupies residues 286 to 306 (VVMANTYLLLPPVVNPLVYGA). The Cytoplasmic portion of the chain corresponds to 307–324 (KTKEICSRVLCMFSQGGK).

The protein belongs to the G-protein coupled receptor 1 family.

It is found in the cell membrane. Odorant receptor. The protein is Olfactory receptor 51D1 (OR51D1) of Homo sapiens (Human).